Reading from the N-terminus, the 292-residue chain is UPF0749 protein Mb1856 (292 aa).

Positions 1–28 (MSENRPEPVAAETSAATTARHSQADAGA) are cleaved as a signal peptide. The tract at residues 1–30 (MSENRPEPVAAETSAATTARHSQADAGAHD) is disordered. The next 3 helical transmembrane spans lie at 68–88 (VFGT…VTQV), 152–172 (AALS…MITI), and 229–249 (VLSP…AAAM).

Belongs to the UPF0749 family.

The protein resides in the cell membrane. The polypeptide is UPF0749 protein Mb1856 (Mycobacterium bovis (strain ATCC BAA-935 / AF2122/97)).